The primary structure comprises 594 residues: Type IV inositol polyphosphate 5-phosphatase 7 (594 aa).

The interval 246 to 300 (FRCGHRPSDYSRRPSDYSRPSDYYSRPSNYSRPSDVSRWGSSDDDNGPGDSPSTF) is disordered. A compositionally biased stretch (basic and acidic residues) spans 251–261 (RPSDYSRRPSD). A compositionally biased stretch (low complexity) spans 262–279 (YSRPSDYYSRPSNYSRPS). Catalytic stretches follow at residues 435 to 450 (DRVI…IALS) and 515 to 530 (KRRT…WHGE).

The protein belongs to the inositol polyphosphate 5-phosphatase family. In terms of tissue distribution, broadly expressed in emerging organs. Mostly localized in procambium of growing organs. Restricted to vascular differentiating cells of young organs.

It is found in the nucleus. It localises to the cell membrane. It carries out the reaction a 1,2-diacyl-sn-glycero-3-phospho-(1D-myo-inositol-4,5-bisphosphate) + H2O = a 1,2-diacyl-sn-glycero-3-phospho-(1D-myo-inositol 4-phosphate) + phosphate. It catalyses the reaction a 1,2-diacyl-sn-glycero-3-phospho-(1D-myo-inositol-3,4,5-trisphosphate) + H2O = a 1,2-diacyl-sn-glycero-3-phospho-(1D-myo-inositol-3,4-bisphosphate) + phosphate. In terms of biological role, has phosphatase activity toward PtdIns(4,5)P2 and at a lower extent toward PtdIns(3,4,5)P3 but not toward Ins(1,4,5)P3. Acts redundantly with CVP2 for maintaining vascular continuity. Regulates phosphoinositide-dependent VAN3 localization. Functions in salt stress response by regulating reactive oxygen species (ROS) production and stress-responsive genes expression. The sequence is that of Type IV inositol polyphosphate 5-phosphatase 7 from Arabidopsis thaliana (Mouse-ear cress).